A 175-amino-acid chain; its full sequence is Adenine phosphoribosyltransferase (175 aa).

Belongs to the purine/pyrimidine phosphoribosyltransferase family. In terms of assembly, homodimer.

The protein resides in the cytoplasm. The enzyme catalyses AMP + diphosphate = 5-phospho-alpha-D-ribose 1-diphosphate + adenine. It functions in the pathway purine metabolism; AMP biosynthesis via salvage pathway; AMP from adenine: step 1/1. In terms of biological role, catalyzes a salvage reaction resulting in the formation of AMP, that is energically less costly than de novo synthesis. The chain is Adenine phosphoribosyltransferase from Pelagibacter ubique (strain HTCC1062).